A 227-amino-acid chain; its full sequence is UPF0173 metal-dependent hydrolase STK_14180 (227 aa).

Belongs to the UPF0173 family.

In Sulfurisphaera tokodaii (strain DSM 16993 / JCM 10545 / NBRC 100140 / 7) (Sulfolobus tokodaii), this protein is UPF0173 metal-dependent hydrolase STK_14180.